The sequence spans 171 residues: Crossover junction endodeoxyribonuclease RuvC (171 aa).

Catalysis depends on residues D7, E66, and D138. Mg(2+) contacts are provided by D7, E66, and D138.

Belongs to the RuvC family. As to quaternary structure, homodimer which binds Holliday junction (HJ) DNA. The HJ becomes 2-fold symmetrical on binding to RuvC with unstacked arms; it has a different conformation from HJ DNA in complex with RuvA. In the full resolvosome a probable DNA-RuvA(4)-RuvB(12)-RuvC(2) complex forms which resolves the HJ. The cofactor is Mg(2+).

It localises to the cytoplasm. The catalysed reaction is Endonucleolytic cleavage at a junction such as a reciprocal single-stranded crossover between two homologous DNA duplexes (Holliday junction).. Functionally, the RuvA-RuvB-RuvC complex processes Holliday junction (HJ) DNA during genetic recombination and DNA repair. Endonuclease that resolves HJ intermediates. Cleaves cruciform DNA by making single-stranded nicks across the HJ at symmetrical positions within the homologous arms, yielding a 5'-phosphate and a 3'-hydroxyl group; requires a central core of homology in the junction. The consensus cleavage sequence is 5'-(A/T)TT(C/G)-3'. Cleavage occurs on the 3'-side of the TT dinucleotide at the point of strand exchange. HJ branch migration catalyzed by RuvA-RuvB allows RuvC to scan DNA until it finds its consensus sequence, where it cleaves and resolves the cruciform DNA. The sequence is that of Crossover junction endodeoxyribonuclease RuvC from Thiobacillus denitrificans (strain ATCC 25259 / T1).